The primary structure comprises 874 residues: Leucine--tRNA ligase (874 aa).

The 'HIGH' region signature appears at P47–H57. A 'KMSKS' region motif is present at residues K636 to S640. Position 639 (K639) interacts with ATP.

Belongs to the class-I aminoacyl-tRNA synthetase family.

The protein resides in the cytoplasm. The catalysed reaction is tRNA(Leu) + L-leucine + ATP = L-leucyl-tRNA(Leu) + AMP + diphosphate. This Acinetobacter baumannii (strain AB307-0294) protein is Leucine--tRNA ligase.